We begin with the raw amino-acid sequence, 326 residues long: Amino acid--[acyl-carrier-protein] ligase 1 (326 aa).

Cys-131 serves as a coordination point for Zn(2+). ATP-binding positions include Arg-159, Glu-161, and 168–169 (RL). Glu-176 is a binding site for Zn(2+). Glu-176 provides a ligand contact to an L-alpha-amino acid. Residues Lys-235 and 250 to 253 (ACMS) contribute to the ATP site. Residue Cys-279 participates in Zn(2+) binding. Arg-286 contacts ATP.

Belongs to the class-II aminoacyl-tRNA synthetase family. Amino acid--[acyl-carrier-protein] ligase subfamily. In terms of assembly, homodimer. The cofactor is Zn(2+).

It catalyses the reaction an L-alpha-amino acid + holo-[ACP] + ATP = an L-alpha-aminoacyl-[ACP] + AMP + diphosphate. Catalyzes the ATP-dependent activation of L-glycine and its transfer to the phosphopantetheine prosthetic group covalently attached to the vicinal carrier protein bsr0959 of yet unknown function. May participate in nonribosomal peptide synthesis or related processes. L-alanine is a poor substrate whereas L-serine or D-amino acids are not substrates for ATP-dependent activation. Does not display tRNA aminoacylation activity. This chain is Amino acid--[acyl-carrier-protein] ligase 1, found in Bradyrhizobium diazoefficiens (strain JCM 10833 / BCRC 13528 / IAM 13628 / NBRC 14792 / USDA 110).